A 161-amino-acid polypeptide reads, in one-letter code: RuBisCO chaperone RbcX (161 aa).

2 disordered regions span residues 1–20 and 130–161; these read MQFMGTASRMASTQRAKPME and LGAEPSLPETEVSDRPSDSATPDDASNASHAD. Residues 147–161 are compositionally biased toward polar residues; it reads DSATPDDASNASHAD.

This sequence belongs to the RbcX family. Homodimer. Interacts with the exposed C-terminal peptide of endogenous RbcL ('Lys-460-Asp-470') via its central cleft, as well as C-terminal peptides from other cyanobacterial RbcL. Contacts a second RbcL monomer via its peripheral polar surface.

It is found in the carboxysome. It localises to the cytoplasm. In terms of biological role, an RbcL-specific chaperone. The central cleft of the RbcX homodimer (RbcX2) binds the C-terminus of an RbcL monomer, stabilizing the C-terminus and probably preventing its reassociation with chaperonin GroEL-ES. At the same time the peripheral region of RbcX2 binds a second RbcL monomer, bridging the RbcL homodimers in the correct orientation. The RbcX2(2)-bound RbcL dimers then assemble into the RbcL8 core (RbcL8-(RbcX2)8). RbcS binding triggers the release of RbcX2. The polypeptide is RuBisCO chaperone RbcX (Synechococcus sp. (strain ATCC 27144 / PCC 6301 / SAUG 1402/1) (Anacystis nidulans)).